We begin with the raw amino-acid sequence, 347 residues long: uncharacterized protein (347 aa).

The segment at 5 to 44 adopts an RING-type zinc-finger fold; the sequence is CTICHNTPNRPVRLDCNHEFCYICIKGSIQNDMLNCAVCR. The WWE domain occupies 244-321; it reads NVQANFNVAR…NLDAWRQIKR (78 aa).

This is an uncharacterized protein from Caenorhabditis elegans.